The sequence spans 1173 residues: Rac guanine nucleotide exchange factor JJ (1173 aa).

Disordered stretches follow at residues 1 to 380 (MSYE…NQTQ), 458 to 479 (KDQL…LKQM), and 712 to 765 (DDQN…QQQQ). Composition is skewed to low complexity over residues 8-23 (QQQQ…QQQQ) and 35-45 (QQQQHPQPQYP). A compositionally biased stretch (polar residues) spans 50–62 (TAQSNDSQQQHYG). Composition is skewed to low complexity over residues 72 to 82 (TTSTTQQQQQQ) and 98 to 118 (QYDQ…NYDY). Polar residues predominate over residues 119–133 (SNTSGNRNSGQYDQY). Low complexity-rich tracts occupy residues 134 to 143 (TTTNTTSANT), 153 to 191 (SPTP…TSTN), and 208 to 219 (SQTQQQHSPTSS). The span at 220 to 239 (YDYSQVTNNTATNYDSYYQQ) shows a compositional bias: polar residues. Over residues 240-258 (PTTPTSTSSSSSTTTTTTT) the composition is skewed to low complexity. Residues 262-277 (SKFEKSQSLKNMDHFI) are compositionally biased toward basic and acidic residues. The segment covering 280 to 295 (TPSNTPSATINSWDYN) has biased composition (polar residues). Positions 296 to 380 (QQQPQPQQPQ…NTDTYSNQTQ (85 aa)) are enriched in low complexity. The span at 470–479 (KKGEEDLKQM) shows a compositional bias: basic and acidic residues. Over residues 743 to 765 (QQPQPQQEQPPQQQQQQQQQQQQ) the composition is skewed to low complexity. An IQ domain is found at 793-822 (RFGDIIRVQRVSRKWLARKKFKDLVKMKLL). In terms of domain architecture, DH spans 833 to 1016 (NRFKSVNELY…KDINKYINDR (184 aa)). The PH domain maps to 1044-1146 (RYFVRESQCN…WLQDLSVELK (103 aa)).

In terms of biological role, GTPase-activating protein. The polypeptide is Rac guanine nucleotide exchange factor JJ (gxcJJ) (Dictyostelium discoideum (Social amoeba)).